The following is a 62-amino-acid chain: MRLLFLLFILLVCLAQTTSGRKRNSKFRPCEKMGGICKSQKTHGCSILPAECKSRYKHCCRL.

Positions 1–20 are cleaved as a signal peptide; sequence MRLLFLLFILLVCLAQTTSG. 3 cysteine pairs are disulfide-bonded: Cys30–Cys59, Cys37–Cys52, and Cys45–Cys60.

It belongs to the beta-defensin family.

It localises to the secreted. Has antibacterial activity. This chain is Beta-defensin 33 (Defb33), found in Mus musculus (Mouse).